Reading from the N-terminus, the 96-residue chain is Guanyl-specific ribonuclease Sa (96 aa).

A disulfide bond links cysteine 7 and cysteine 96. Glutamate 54 serves as the catalytic Proton acceptor. The active-site Proton donor is histidine 85.

This sequence belongs to the ribonuclease N1/T1 family.

It localises to the secreted. It carries out the reaction [RNA] containing guanosine + H2O = an [RNA fragment]-3'-guanosine-3'-phosphate + a 5'-hydroxy-ribonucleotide-3'-[RNA fragment].. This Kitasatospora aureofaciens (Streptomyces aureofaciens) protein is Guanyl-specific ribonuclease Sa (rnaSA).